Consider the following 451-residue polypeptide: MYTSIYITDSKKNLVFEYLLTSQAPTFQQLCSKIAGRDAAMDAMVAISKDMSLYRQAVGPEKLWYWALCQACGDPLEPQMFLAQYHQVLIEYFDKEALTVKKLVNNADRLALLLHAMLDAGEVAVTDSNRLRQLVPLRNDLSTILNSATKTLANTVKYADSKQLFGAPVATGKVEAGQTVPWRTADCRYVNNEIYVDLVETVNATLRQKGSSLTLINGSLSGKIDVKCYLSGNPTVQLKLRTSGHPLDNSALHRCVELGEAGVATMNFVPPDGRFTLAEYAIDLSAISQAARRLTNLGLVTVSLASGLGQHRDEFEIKVIIGNSTQVAAIEDLRITVYFPDISDAAKIKILRTTHGGWESDLSRVRGVWAFDKQTAVGSVPVLRGCVENPESTPHAPPVFPSHLAVSYSHVGQLPSGIRVDTIALSDLPPGSKPFKGVKYTSRAGDYIVRA.

Residues 191–450 form the MHD domain; sequence NNEIYVDLVE…TSRAGDYIVR (260 aa).

This sequence belongs to the adaptor complexes medium subunit family. As to quaternary structure, adaptor protein complex 3 (AP-3) is a heterotetramer composed of 2 large adaptins (APL5 and APL6), a medium adaptin (APM3) and a small adaptin (APS3).

It is found in the golgi apparatus. The protein localises to the cytoplasmic vesicle membrane. Functionally, part of the AP-3 complex, an adaptor-related complex which is not clathrin-associated. The complex is associated with the Golgi region as well as more peripheral structures. It facilitates the budding of vesicles from the Golgi membrane and may be directly involved in trafficking to the vacuole. The protein is AP-3 complex subunit mu (APM3) of Eremothecium gossypii (strain ATCC 10895 / CBS 109.51 / FGSC 9923 / NRRL Y-1056) (Yeast).